Reading from the N-terminus, the 493-residue chain is Ribonuclease Y (493 aa).

A helical transmembrane segment spans residues 19-39 (IFAILFLIIVILNLGLLVFLA). The 70-residue stretch at 172-241 (SASFTVIESD…LTIRNILIND (70 aa)) folds into the KH domain. The HD domain occupies 300–392 (VLSHCLETGF…TQIGDKLSAG (93 aa)).

Belongs to the RNase Y family.

The protein localises to the cell membrane. Endoribonuclease that initiates mRNA decay. In Mycoplasma pneumoniae (strain ATCC 29342 / M129 / Subtype 1) (Mycoplasmoides pneumoniae), this protein is Ribonuclease Y.